The primary structure comprises 196 residues: Holliday junction branch migration complex subunit RuvA (196 aa).

Positions 1-63 (MINKIYGKVI…ENELKLFGFL (63 aa)) are domain I. Positions 64–139 (NSDERETFKS…KLLINNELES (76 aa)) are domain II. S139 is a region of interest (flexible linker). A domain III region spans residues 139 to 196 (SSLFRFKELEESIVSMGFDRKIVNSKLKEAFNLVEFSNLKDSEKEQFLFKEVLKRMSN).

It belongs to the RuvA family. Homotetramer. Forms an RuvA(8)-RuvB(12)-Holliday junction (HJ) complex. HJ DNA is sandwiched between 2 RuvA tetramers; dsDNA enters through RuvA and exits via RuvB. An RuvB hexamer assembles on each DNA strand where it exits the tetramer. Each RuvB hexamer is contacted by two RuvA subunits (via domain III) on 2 adjacent RuvB subunits; this complex drives branch migration. In the full resolvosome a probable DNA-RuvA(4)-RuvB(12)-RuvC(2) complex forms which resolves the HJ.

It localises to the cytoplasm. Functionally, the RuvA-RuvB-RuvC complex processes Holliday junction (HJ) DNA during genetic recombination and DNA repair, while the RuvA-RuvB complex plays an important role in the rescue of blocked DNA replication forks via replication fork reversal (RFR). RuvA specifically binds to HJ cruciform DNA, conferring on it an open structure. The RuvB hexamer acts as an ATP-dependent pump, pulling dsDNA into and through the RuvAB complex. HJ branch migration allows RuvC to scan DNA until it finds its consensus sequence, where it cleaves and resolves the cruciform DNA. This chain is Holliday junction branch migration complex subunit RuvA, found in Borreliella afzelii (strain PKo) (Borrelia afzelii).